We begin with the raw amino-acid sequence, 413 residues long: Probable tRNA sulfurtransferase (413 aa).

The 111-residue stretch at 61–171 folds into the THUMP domain; the sequence is TRVLDRVTRV…EDGTYIFTEK (111 aa). Residues 189 to 190, 214 to 215, R275, G297, and Q306 each bind ATP; these read ML and HF.

This sequence belongs to the ThiI family.

It is found in the cytoplasm. It catalyses the reaction [ThiI sulfur-carrier protein]-S-sulfanyl-L-cysteine + a uridine in tRNA + 2 reduced [2Fe-2S]-[ferredoxin] + ATP + H(+) = [ThiI sulfur-carrier protein]-L-cysteine + a 4-thiouridine in tRNA + 2 oxidized [2Fe-2S]-[ferredoxin] + AMP + diphosphate. It carries out the reaction [ThiS sulfur-carrier protein]-C-terminal Gly-Gly-AMP + S-sulfanyl-L-cysteinyl-[cysteine desulfurase] + AH2 = [ThiS sulfur-carrier protein]-C-terminal-Gly-aminoethanethioate + L-cysteinyl-[cysteine desulfurase] + A + AMP + 2 H(+). The protein operates within cofactor biosynthesis; thiamine diphosphate biosynthesis. Catalyzes the ATP-dependent transfer of a sulfur to tRNA to produce 4-thiouridine in position 8 of tRNAs, which functions as a near-UV photosensor. Also catalyzes the transfer of sulfur to the sulfur carrier protein ThiS, forming ThiS-thiocarboxylate. This is a step in the synthesis of thiazole, in the thiamine biosynthesis pathway. The sulfur is donated as persulfide by IscS. This Natranaerobius thermophilus (strain ATCC BAA-1301 / DSM 18059 / JW/NM-WN-LF) protein is Probable tRNA sulfurtransferase.